The primary structure comprises 317 residues: Aspartate carbamoyltransferase catalytic subunit (317 aa).

Carbamoyl phosphate contacts are provided by R64 and T65. An L-aspartate-binding site is contributed by K92. Residues R114, H142, and Q145 each coordinate carbamoyl phosphate. R176 and R230 together coordinate L-aspartate. 2 residues coordinate carbamoyl phosphate: G271 and P272.

The protein belongs to the aspartate/ornithine carbamoyltransferase superfamily. ATCase family. In terms of assembly, heterododecamer (2C3:3R2) of six catalytic PyrB chains organized as two trimers (C3), and six regulatory PyrI chains organized as three dimers (R2).

It carries out the reaction carbamoyl phosphate + L-aspartate = N-carbamoyl-L-aspartate + phosphate + H(+). It functions in the pathway pyrimidine metabolism; UMP biosynthesis via de novo pathway; (S)-dihydroorotate from bicarbonate: step 2/3. Functionally, catalyzes the condensation of carbamoyl phosphate and aspartate to form carbamoyl aspartate and inorganic phosphate, the committed step in the de novo pyrimidine nucleotide biosynthesis pathway. The chain is Aspartate carbamoyltransferase catalytic subunit from Nitratidesulfovibrio vulgaris (strain DP4) (Desulfovibrio vulgaris).